Reading from the N-terminus, the 309-residue chain is Dehydrogenase/reductase SDR family member 7B (309 aa).

Topologically, residues Met-1 to Leu-5 are cytoplasmic. Residues Gly-6 to Ile-26 form a helical; Signal-anchor for type II membrane protein membrane-spanning segment. At Gln-27–Asp-271 the chain is on the lumenal side. Residues Ser-47 and Leu-49 each coordinate NAD(+). Position 179 (Ser-179) interacts with substrate. The NAD(+) site is built by Tyr-192, Lys-196, and Thr-227. Tyr-192 acts as the Proton acceptor in catalysis.

It belongs to the short-chain dehydrogenases/reductases (SDR) family.

Its subcellular location is the endoplasmic reticulum membrane. Functionally, putative oxidoreductase. This chain is Dehydrogenase/reductase SDR family member 7B (dhrs7b), found in Danio rerio (Zebrafish).